Consider the following 298-residue polypeptide: MRSLYLIVFIVISLVKASKSDDGFCSAPSIVESDEKTNPIYWKATNPTLSPSHLQDLPGFTRSVYKRDHALITPESHVYSPLPDWTNTLGAYLITPATGSHFVMYLAKMKEMSSSGLPPQDIERLIFVVEGAVTLTNTSSSSKKLTVDSYAYLPPNFHHSLDCVESATLVVFERRYEYLGSHTTELIVGSTDKQPLLETPGEVFELRKLLPMSVAYDFNIHTMDFQPGEFLNVKEVHYNQHGLLLLEGQGIYRLGDNWYPVQAGDVIWMAPFVPQWYAALGKTRSRYLLYKDVNRNPL.

A signal peptide spans 1 to 20 (MRSLYLIVFIVISLVKASKS). Residues 222–288 (TMDFQPGEFL…ALGKTRSRYL (67 aa)) enclose the Cupin type-2 domain. The Mn(2+) site is built by E235, H237, H241, and Q275. E235 is a binding site for substrate. The substrate site is built by Q275, Y287, and K291.

It belongs to the UGHY family. Homooctamer. It depends on Mn(2+) as a cofactor.

The protein localises to the endoplasmic reticulum. The catalysed reaction is (S)-2-ureidoglycine + H2O = (S)-ureidoglycolate + NH4(+). Functionally, involved in the catabolism of purine nucleotides. Can use (S)-2-ureidoglycine as substrate, but not allantoate. The sequential activity of AAH, UGLYAH and UAH allows a complete purine breakdown without the intermediate generation of urea. This chain is (S)-ureidoglycine aminohydrolase (UGLYAH), found in Arabidopsis thaliana (Mouse-ear cress).